A 157-amino-acid polypeptide reads, in one-letter code: UPF0262 protein amb3341 (157 aa).

It belongs to the UPF0262 family.

This is UPF0262 protein amb3341 from Paramagnetospirillum magneticum (strain ATCC 700264 / AMB-1) (Magnetospirillum magneticum).